The sequence spans 120 residues: Phosphoribosyl-AMP cyclohydrolase (120 aa).

Mg(2+) is bound at residue Asp74. Residue Cys75 coordinates Zn(2+). 2 residues coordinate Mg(2+): Asp76 and Asp78. Positions 91 and 98 each coordinate Zn(2+).

Belongs to the PRA-CH family. Homodimer. Mg(2+) serves as cofactor. The cofactor is Zn(2+).

The protein resides in the cytoplasm. The catalysed reaction is 1-(5-phospho-beta-D-ribosyl)-5'-AMP + H2O = 1-(5-phospho-beta-D-ribosyl)-5-[(5-phospho-beta-D-ribosylamino)methylideneamino]imidazole-4-carboxamide. It functions in the pathway amino-acid biosynthesis; L-histidine biosynthesis; L-histidine from 5-phospho-alpha-D-ribose 1-diphosphate: step 3/9. In terms of biological role, catalyzes the hydrolysis of the adenine ring of phosphoribosyl-AMP. The sequence is that of Phosphoribosyl-AMP cyclohydrolase from Natronomonas pharaonis (strain ATCC 35678 / DSM 2160 / CIP 103997 / JCM 8858 / NBRC 14720 / NCIMB 2260 / Gabara) (Halobacterium pharaonis).